The chain runs to 110 residues: UPF0060 membrane protein Veis_0342 (110 aa).

The next 4 helical transmembrane spans lie at 8 to 28 (VLFT…WLVI), 33 to 53 (PLWL…LLTL), 63 to 83 (AAYG…VDGV), and 90 to 110 (VAGA…PASA).

The protein belongs to the UPF0060 family.

Its subcellular location is the cell inner membrane. This chain is UPF0060 membrane protein Veis_0342, found in Verminephrobacter eiseniae (strain EF01-2).